A 547-amino-acid chain; its full sequence is GID complex substrate-recognition subunit 10 (547 aa).

Composition is skewed to polar residues over residues 1–11 and 28–41; these read MPRSLDNFQNE and GFPN…SNSQ. Disordered stretches follow at residues 1–42, 60–115, 169–217, and 285–313; these read MPRS…NSQR, EQDS…SNAT, RNSS…NPQS, and PAVL…QTPN. Residues 99–108 show a composition bias toward basic residues; the sequence is SASRQRRRSG. The span at 169–185 shows a compositional bias: polar residues; the sequence is RNSSTFGSNPNSVFSAQ. 3 stretches are compositionally biased toward low complexity: residues 186–199, 207–217, and 298–307; these read PTEP…SSFP, SRSISISNPQS, and SSSSASSYGS.

This sequence belongs to the GID4/VID24 family. In terms of assembly, substrate-recognition component of the GID/CTLH complex. In the absence of stress, the complex exists as an inactive anticipatory complex (GID(Ant)), composed of Gid1, the E3 ubiquitin-ligase Gid2, Gid5, Gid8, and the RING-like subunit Gid9, awaiting a substrate receptor to form the active E3 ligase complex. When cells are shifted to glucose-containing medium, the substrate receptor Gid4 is induced and becomes part of the complex, named GID(SR4). Additionally, Gid7 transforms the GID(SR4) E3 ligase core into a higher-order supramolecular assembly (Chelator-GID(SR4)). Under osmotic or heat stress, the substrate receptor Gid10 is induced and becomes part of the complex, named GID(SR10). Interacts with proteins that have an N-terminal Pro/N-degron.

The protein localises to the nucleus. Functionally, substrate-recognition component of the GID E3 ligase complex recruiting N termini and catalyzing ubiquitination of proteins targeted for degradation. GID E3 is regulated through assembly with interchangeable N-degron-binding substrate receptors induced by distinct environmental perturbations. Required for the adaptation to osmotic or heat stress. Specific for substrates with an N-terminal Pro (Pro/N-degron). This chain is GID complex substrate-recognition subunit 10 (gid10), found in Schizosaccharomyces pombe (strain 972 / ATCC 24843) (Fission yeast).